A 423-amino-acid polypeptide reads, in one-letter code: Protein disulfide isomerase-like 5-2 (423 aa).

Residues 1–35 (MAATTTRPLPLLLLLLLPPLLLLLLSFHAAAAAAA) form the signal peptide. The Thioredoxin domain occupies 36–149 (EEFPRDGRVI…LVRNLNKFVA (114 aa)). Residues C71 and C74 each act as nucleophile in the active site. An intrachain disulfide couples C71 to C74. N181 is a glycosylation site (N-linked (GlcNAc...) asparagine). Residues 386–406 (LVSLNSLYILICVFALLGVMI) form a helical membrane-spanning segment.

It belongs to the protein disulfide isomerase family.

It is found in the membrane. In terms of biological role, acts as a protein-folding catalyst that interacts with nascent polypeptides to catalyze the formation, isomerization, and reduction or oxidation of disulfide bonds. May play a role in storage protein biogenesis. The polypeptide is Protein disulfide isomerase-like 5-2 (PDIL5-2) (Oryza sativa subsp. japonica (Rice)).